The following is a 522-amino-acid chain: Maturase K (522 aa).

The protein belongs to the intron maturase 2 family. MatK subfamily.

It localises to the plastid. The protein localises to the chloroplast. In terms of biological role, usually encoded in the trnK tRNA gene intron. Probably assists in splicing its own and other chloroplast group II introns. The sequence is that of Maturase K from Aristea glauca.